A 333-amino-acid polypeptide reads, in one-letter code: Lipoyl synthase (333 aa).

Cys-55, Cys-60, Cys-66, Cys-81, Cys-85, Cys-88, and Ser-292 together coordinate [4Fe-4S] cluster. The region spanning 67 to 281 (WEDREATFLI…SAEAERLGFA (215 aa)) is the Radical SAM core domain.

This sequence belongs to the radical SAM superfamily. Lipoyl synthase family. The cofactor is [4Fe-4S] cluster.

Its subcellular location is the cytoplasm. The catalysed reaction is [[Fe-S] cluster scaffold protein carrying a second [4Fe-4S](2+) cluster] + N(6)-octanoyl-L-lysyl-[protein] + 2 oxidized [2Fe-2S]-[ferredoxin] + 2 S-adenosyl-L-methionine + 4 H(+) = [[Fe-S] cluster scaffold protein] + N(6)-[(R)-dihydrolipoyl]-L-lysyl-[protein] + 4 Fe(3+) + 2 hydrogen sulfide + 2 5'-deoxyadenosine + 2 L-methionine + 2 reduced [2Fe-2S]-[ferredoxin]. It participates in protein modification; protein lipoylation via endogenous pathway; protein N(6)-(lipoyl)lysine from octanoyl-[acyl-carrier-protein]: step 2/2. In terms of biological role, catalyzes the radical-mediated insertion of two sulfur atoms into the C-6 and C-8 positions of the octanoyl moiety bound to the lipoyl domains of lipoate-dependent enzymes, thereby converting the octanoylated domains into lipoylated derivatives. In Kineococcus radiotolerans (strain ATCC BAA-149 / DSM 14245 / SRS30216), this protein is Lipoyl synthase.